The primary structure comprises 400 residues: Phosphoglycerate kinase (400 aa).

Substrate-binding positions include 21–23 (DFN), R36, 59–62 (HLGR), R119, and R160. ATP is bound by residues K211, E329, and 356-359 (GGDS).

Belongs to the phosphoglycerate kinase family. In terms of assembly, monomer.

The protein resides in the cytoplasm. The catalysed reaction is (2R)-3-phosphoglycerate + ATP = (2R)-3-phospho-glyceroyl phosphate + ADP. It functions in the pathway carbohydrate degradation; glycolysis; pyruvate from D-glyceraldehyde 3-phosphate: step 2/5. In Levilactobacillus brevis (strain ATCC 367 / BCRC 12310 / CIP 105137 / JCM 1170 / LMG 11437 / NCIMB 947 / NCTC 947) (Lactobacillus brevis), this protein is Phosphoglycerate kinase.